Consider the following 448-residue polypeptide: Adenylosuccinate synthetase (448 aa).

GTP contacts are provided by residues 36–42 (GDEGKGK) and 64–66 (GHT). The active-site Proton acceptor is aspartate 37. Residues aspartate 37 and glycine 64 each coordinate Mg(2+). IMP is bound by residues 37–40 (DEGK), 62–65 (NAGH), threonine 154, arginine 168, asparagine 246, threonine 261, and arginine 325. The active-site Proton donor is histidine 65. 321 to 327 (VTTKRKR) is a substrate binding site. Residues arginine 327, 353–355 (KLD), and 436–438 (GVG) each bind GTP.

The protein belongs to the adenylosuccinate synthetase family. As to quaternary structure, homodimer. Mg(2+) serves as cofactor.

The protein localises to the cytoplasm. The catalysed reaction is IMP + L-aspartate + GTP = N(6)-(1,2-dicarboxyethyl)-AMP + GDP + phosphate + 2 H(+). It participates in purine metabolism; AMP biosynthesis via de novo pathway; AMP from IMP: step 1/2. Its function is as follows. Plays an important role in the de novo pathway and in the salvage pathway of purine nucleotide biosynthesis. Catalyzes the first committed step in the biosynthesis of AMP from IMP. In Drosophila virilis (Fruit fly), this protein is Adenylosuccinate synthetase.